The following is a 404-amino-acid chain: MAERFDRIWHNARLATMRADRPDLGEIEHGLIAARGGHIVYAGAAADFPADADAIKRIDCAGRWITPGLVDCHTHLVYGGNRAHEFELRLKGASYEEIARAGGGIVSTVAATRKASEAELVASALPRLDALIGEGATTVEIKSGYGLDAETEMRQLAAARSLGRQRPVAIRTSFLGAHALPPEADGDKDRYIDLVCKEMLPAVAKAGLADAVDTFMEGIAFSAGQTARVFETARGLGLPVKLHADQLSNLGGAALAAKFSALSADHLEHTDEAGAAAMAKAGTVAVLLPGAFYFIRETQKPPVESFRKHGVHMALASDCNPGSSPLTSLLLAMNMGATLFRMTVAECLAGVTREGAHALGVLDETGTLEAGKWCDLAIWDIERPAELVYRIGFNPLHRRVWRGQ.

2 residues coordinate Fe(3+): His-73 and His-75. Residues His-73 and His-75 each contribute to the Zn(2+) site. The 4-imidazolone-5-propanoate site is built by Arg-82, Tyr-145, and His-178. Tyr-145 serves as a coordination point for N-formimidoyl-L-glutamate. A Fe(3+)-binding site is contributed by His-243. Zn(2+) is bound at residue His-243. Gln-246 provides a ligand contact to 4-imidazolone-5-propanoate. Residue Asp-318 participates in Fe(3+) binding. Residue Asp-318 participates in Zn(2+) binding. 2 residues coordinate N-formimidoyl-L-glutamate: Asn-320 and Gly-322. Ser-323 serves as a coordination point for 4-imidazolone-5-propanoate.

It belongs to the metallo-dependent hydrolases superfamily. HutI family. Requires Zn(2+) as cofactor. The cofactor is Fe(3+).

It localises to the cytoplasm. The catalysed reaction is 4-imidazolone-5-propanoate + H2O = N-formimidoyl-L-glutamate. The protein operates within amino-acid degradation; L-histidine degradation into L-glutamate; N-formimidoyl-L-glutamate from L-histidine: step 3/3. Functionally, catalyzes the hydrolytic cleavage of the carbon-nitrogen bond in imidazolone-5-propanoate to yield N-formimidoyl-L-glutamate. It is the third step in the universal histidine degradation pathway. The polypeptide is Imidazolonepropionase (Bradyrhizobium diazoefficiens (strain JCM 10833 / BCRC 13528 / IAM 13628 / NBRC 14792 / USDA 110)).